We begin with the raw amino-acid sequence, 568 residues long: Proline--tRNA ligase (568 aa).

This sequence belongs to the class-II aminoacyl-tRNA synthetase family. ProS type 1 subfamily. Homodimer.

Its subcellular location is the cytoplasm. The enzyme catalyses tRNA(Pro) + L-proline + ATP = L-prolyl-tRNA(Pro) + AMP + diphosphate. Catalyzes the attachment of proline to tRNA(Pro) in a two-step reaction: proline is first activated by ATP to form Pro-AMP and then transferred to the acceptor end of tRNA(Pro). As ProRS can inadvertently accommodate and process non-cognate amino acids such as alanine and cysteine, to avoid such errors it has two additional distinct editing activities against alanine. One activity is designated as 'pretransfer' editing and involves the tRNA(Pro)-independent hydrolysis of activated Ala-AMP. The other activity is designated 'posttransfer' editing and involves deacylation of mischarged Ala-tRNA(Pro). The misacylated Cys-tRNA(Pro) is not edited by ProRS. The chain is Proline--tRNA ligase from Chromobacterium violaceum (strain ATCC 12472 / DSM 30191 / JCM 1249 / CCUG 213 / NBRC 12614 / NCIMB 9131 / NCTC 9757 / MK).